We begin with the raw amino-acid sequence, 429 residues long: Enolase (429 aa).

Glutamine 163 lines the (2R)-2-phosphoglycerate pocket. Glutamate 205 acts as the Proton donor in catalysis. Mg(2+)-binding residues include aspartate 242, glutamate 285, and aspartate 312. (2R)-2-phosphoglycerate contacts are provided by lysine 337, arginine 366, serine 367, and lysine 388. Catalysis depends on lysine 337, which acts as the Proton acceptor.

It belongs to the enolase family. It depends on Mg(2+) as a cofactor.

The protein resides in the cytoplasm. It localises to the secreted. It is found in the cell surface. It carries out the reaction (2R)-2-phosphoglycerate = phosphoenolpyruvate + H2O. It functions in the pathway carbohydrate degradation; glycolysis; pyruvate from D-glyceraldehyde 3-phosphate: step 4/5. Functionally, catalyzes the reversible conversion of 2-phosphoglycerate (2-PG) into phosphoenolpyruvate (PEP). It is essential for the degradation of carbohydrates via glycolysis. The sequence is that of Enolase from Methylorubrum extorquens (strain CM4 / NCIMB 13688) (Methylobacterium extorquens).